The chain runs to 421 residues: Gamma-glutamyl phosphate reductase (421 aa).

The protein belongs to the gamma-glutamyl phosphate reductase family.

It localises to the cytoplasm. It catalyses the reaction L-glutamate 5-semialdehyde + phosphate + NADP(+) = L-glutamyl 5-phosphate + NADPH + H(+). It participates in amino-acid biosynthesis; L-proline biosynthesis; L-glutamate 5-semialdehyde from L-glutamate: step 2/2. Functionally, catalyzes the NADPH-dependent reduction of L-glutamate 5-phosphate into L-glutamate 5-semialdehyde and phosphate. The product spontaneously undergoes cyclization to form 1-pyrroline-5-carboxylate. This is Gamma-glutamyl phosphate reductase from Roseobacter denitrificans (strain ATCC 33942 / OCh 114) (Erythrobacter sp. (strain OCh 114)).